A 763-amino-acid chain; its full sequence is Pentatricopeptide repeat-containing protein At4g32430, mitochondrial (763 aa).

The transit peptide at Met1–Asn38 directs the protein to the mitochondrion. 17 PPR repeats span residues Asp77 to Ser109, Phe110 to Pro140, Asp141 to Phe172, Asp173 to Ser207, Asp208 to Lys238, Asp239 to Leu274, Asp275 to Ser309, Leu310 to Ser344, Ser350 to Pro370, Asn371 to Ser405, Glu406 to Arg436, Glu437 to Asn471, Glu472 to Ser507, Cys508 to Lys538, Asn539 to Pro573, Asp574 to Val604, and Ser610 to Gly640. Residues Met645–Gly720 are type E motif. The interval Gly724–Asn756 is type E(+) motif.

It belongs to the PPR family. PCMP-E subfamily.

It is found in the mitochondrion. The chain is Pentatricopeptide repeat-containing protein At4g32430, mitochondrial (PCMP-E40) from Arabidopsis thaliana (Mouse-ear cress).